The following is a 365-amino-acid chain: UDP-N-acetylglucosamine--N-acetylmuramyl-(pentapeptide) pyrophosphoryl-undecaprenol N-acetylglucosamine transferase (365 aa).

UDP-N-acetyl-alpha-D-glucosamine contacts are provided by residues 12–14 (TGG), asparagine 123, arginine 166, serine 194, and glutamine 295.

This sequence belongs to the glycosyltransferase 28 family. MurG subfamily.

The protein resides in the cell inner membrane. The catalysed reaction is di-trans,octa-cis-undecaprenyl diphospho-N-acetyl-alpha-D-muramoyl-L-alanyl-D-glutamyl-meso-2,6-diaminopimeloyl-D-alanyl-D-alanine + UDP-N-acetyl-alpha-D-glucosamine = di-trans,octa-cis-undecaprenyl diphospho-[N-acetyl-alpha-D-glucosaminyl-(1-&gt;4)]-N-acetyl-alpha-D-muramoyl-L-alanyl-D-glutamyl-meso-2,6-diaminopimeloyl-D-alanyl-D-alanine + UDP + H(+). It participates in cell wall biogenesis; peptidoglycan biosynthesis. In terms of biological role, cell wall formation. Catalyzes the transfer of a GlcNAc subunit on undecaprenyl-pyrophosphoryl-MurNAc-pentapeptide (lipid intermediate I) to form undecaprenyl-pyrophosphoryl-MurNAc-(pentapeptide)GlcNAc (lipid intermediate II). The protein is UDP-N-acetylglucosamine--N-acetylmuramyl-(pentapeptide) pyrophosphoryl-undecaprenol N-acetylglucosamine transferase of Phenylobacterium zucineum (strain HLK1).